A 62-amino-acid polypeptide reads, in one-letter code: Coiled-coil domain-containing protein YLR146W-A (62 aa).

Positions 14 to 49 form a coiled coil; sequence EHARMLQNEIQQLFAQLRDTNSQIRCDLNEFEQIKE.

This is Coiled-coil domain-containing protein YLR146W-A from Saccharomyces cerevisiae (strain ATCC 204508 / S288c) (Baker's yeast).